The primary structure comprises 461 residues: Isthmin-1 (461 aa).

An N-terminal signal peptide occupies residues 1 to 26; it reads MVRLAAELLLLLGLLLLTLHITVLRS. N33 carries N-linked (GlcNAc...) asparagine glycosylation. A compositionally biased stretch (polar residues) spans 40–58; the sequence is QDSRVAENNVNADSSSSVQ. Disordered stretches follow at residues 40-62, 73-92, and 128-188; these read QDSRVAENNVNADSSSSVQLGPG, ASQPWAQSPGTGGSLQRDGP, and EGSE…NFLK. Positions 131–141 are enriched in basic and acidic residues; the sequence is EPEKGMRKENK. A compositionally biased stretch (low complexity) spans 156–165; that stretch reads SSSSSSSSVS. In terms of domain architecture, TSP type-1 spans 215 to 259; sequence DGEGDWSAWSPCSVSCGNGNQKRTRSCGYACTATESRTCDMPSCP. Disulfide bonds link C226–C253, C230–C258, and C241–C245. N-linked (GlcNAc...) asparagine glycosylation occurs at N282. Positions 286–449 constitute an AMOP domain; the sequence is LFGVDTDSCE…QKCAENPQDE (164 aa).

This sequence belongs to the isthmin family.

It is found in the secreted. In terms of biological role, may specifically influence certain angiogenesis process. The polypeptide is Isthmin-1 (ism1) (Danio rerio (Zebrafish)).